Consider the following 361-residue polypeptide: Gibberellin 20 oxidase 1-D (361 aa).

Positions 199 to 299 (GNDSIMRLNY…RKSLAFFLCP (101 aa)) constitute a Fe2OG dioxygenase domain. Fe cation contacts are provided by His-224, Asp-226, and His-280. Arg-290 is an active-site residue.

Belongs to the iron/ascorbate-dependent oxidoreductase family. GA20OX subfamily. Fe cation serves as cofactor. It depends on L-ascorbate as a cofactor. As to expression, expressed in nodes and the ear of the elongating stem.

It catalyses the reaction gibberellin A12 + 2 2-oxoglutarate + 3 O2 + H(+) = gibberellin A9 + 2 succinate + 3 CO2 + 2 H2O. It carries out the reaction gibberellin A53 + 2 2-oxoglutarate + 3 O2 + H(+) = gibberellin A20 + 2 succinate + 3 CO2 + 2 H2O. Its function is as follows. Key oxidase enzyme in the biosynthesis of gibberellin that catalyzes the conversion of GA12 and GA53 to GA9 and GA20 respectively, via a three-step oxidation at C-20 of the GA skeleton. The protein is Gibberellin 20 oxidase 1-D (GA20ox1D) of Triticum aestivum (Wheat).